We begin with the raw amino-acid sequence, 618 residues long: Manganese lipoxygenase (618 aa).

The first 16 residues, Met1 to Ala16, serve as a signal peptide directing secretion. Low complexity predominate over residues Ser36–Thr45. The disordered stretch occupies residues Ser36–Ala58. Positions Gln46–Ala58 are enriched in polar residues. A Lipoxygenase domain is found at Tyr47 to Ser617. N-linked (GlcNAc...) asparagine glycans are attached at residues Asn60, Asn91, Asn106, Asn116, and Asn157. Mn(2+) is bound by residues His290, His294, His478, and Asn482. A glycan (N-linked (GlcNAc...) asparagine) is linked at Asn513. A Mn(2+)-binding site is contributed by Val618.

The protein belongs to the lipoxygenase family. Mn(2+) serves as cofactor. Post-translationally, N- and O-glycosylated.

The protein localises to the secreted. It carries out the reaction (9Z,12Z)-octadecadienoate + O2 = (11S)-hydroperoxy-(9Z,12Z)-octadecadienoate. The enzyme catalyses (9Z,12Z)-octadecadienoate + O2 = (13R)-hydroperoxy-(9Z,11E)-octadecadienoate. The catalysed reaction is (9Z,12Z,15Z)-octadecatrienoate + O2 = (11S)-hydroperoxy-(9Z,12Z,15Z)-octadecatrienoate. It catalyses the reaction (9Z,12Z,15Z)-octadecatrienoate + O2 = (13R)-hydroperoxy-(9Z,11E,15Z)-octadecatrienoate. Its function is as follows. Lipoxygenase that metabolizes linoleic and alpha-linolenic acids to 11S- and 13R-hydroperoxy fatty acids. At the end of lipoxygenation, the intermediate product 11S-HPODE from linoleic acid is then transformed into 13R-HPODE as the final product. It also acts on alpha-linolenic acid producing 11S-HPOTrE and 13R-HPOTrE with subsequent transformation of 11S-HPOTrE to 13R-HPOTrE as the final product. Gamma-linolenic acid is a poor substrate. Oleate and arachidonate are not substrates. The sequence is that of Manganese lipoxygenase from Gaeumannomyces tritici (Wheat and barley take-all root rot fungus).